Reading from the N-terminus, the 41-residue chain is Hadrurin (41 aa).

It belongs to the non-disulfide-bridged peptide (NDBP) superfamily. Long chain multifunctional peptide (group 2) family. Expressed by the venom gland.

It localises to the secreted. Its function is as follows. Antimicrobial activity against S.typhimurium, K.pneumoniae, E.cloacae, P.aeruginosa, E.coli and S.marcescens. Also shows hemolytic activity when tested in human erythrocytes. This chain is Hadrurin, found in Hoffmannihadrurus aztecus (Mexican scorpion).